A 134-amino-acid chain; its full sequence is uncharacterized protein (134 aa).

The next 3 membrane-spanning stretches (helical) occupy residues 5–25, 30–50, and 62–82; these read FGIF…FGGF, LILL…ETII, and LVKK…DQLL.

The protein belongs to the bacteriophage holin family. Cp-1 holin subfamily.

It is found in the cell membrane. This is an uncharacterized protein from Bacillus subtilis (strain 168).